The sequence spans 43 residues: Alpha-conotoxin-like Leo-A1 (43 aa).

The propeptide occupies 1 to 26 (LTLDRASDDTDVAAEIMSGLIALAID). 2 cysteine pairs are disulfide-bonded: cysteine 28–cysteine 34 and cysteine 29–cysteine 42. The lacks the Ser-Xaa-Pro motif that is crucial for potent interaction with nAChR stretch occupies residues 30 to 32 (SDS).

It belongs to the conotoxin A superfamily. As to expression, expressed by the venom duct.

It is found in the secreted. Functionally, alpha-conotoxins act on postsynaptic membranes, they bind to the nicotinic acetylcholine receptors (nAChR) and thus inhibit them. Has possibly a distinct nAChR binding mode from other alpha-conotoxins, due to a different three residue motif (lacks the Ser-Xaa-Pro motif). This is Alpha-conotoxin-like Leo-A1 from Conus leopardus (Leopard cone).